The sequence spans 63 residues: Large ribosomal subunit protein bL28 (63 aa).

Belongs to the bacterial ribosomal protein bL28 family.

In Symbiobacterium thermophilum (strain DSM 24528 / JCM 14929 / IAM 14863 / T), this protein is Large ribosomal subunit protein bL28.